A 345-amino-acid chain; its full sequence is Anthranilate phosphoribosyltransferase (345 aa).

Residues Gly-79, 82-83 (GD), Thr-87, 89-92 (NVST), 106-114 (KHGNRAVSG), and Ser-118 each bind 5-phospho-alpha-D-ribose 1-diphosphate. Residue Gly-79 coordinates anthranilate. Ser-91 lines the Mg(2+) pocket. Residue Asn-109 coordinates anthranilate. Residue Arg-164 coordinates anthranilate. The Mg(2+) site is built by Asp-223 and Glu-224.

The protein belongs to the anthranilate phosphoribosyltransferase family. As to quaternary structure, homodimer. Requires Mg(2+) as cofactor.

The catalysed reaction is N-(5-phospho-beta-D-ribosyl)anthranilate + diphosphate = 5-phospho-alpha-D-ribose 1-diphosphate + anthranilate. Its pathway is amino-acid biosynthesis; L-tryptophan biosynthesis; L-tryptophan from chorismate: step 2/5. Catalyzes the transfer of the phosphoribosyl group of 5-phosphorylribose-1-pyrophosphate (PRPP) to anthranilate to yield N-(5'-phosphoribosyl)-anthranilate (PRA). This chain is Anthranilate phosphoribosyltransferase, found in Saccharolobus islandicus (strain M.16.27) (Sulfolobus islandicus).